The chain runs to 135 residues: ATP synthase epsilon chain (135 aa).

It belongs to the ATPase epsilon chain family. F-type ATPases have 2 components, CF(1) - the catalytic core - and CF(0) - the membrane proton channel. CF(1) has five subunits: alpha(3), beta(3), gamma(1), delta(1), epsilon(1). CF(0) has three main subunits: a, b and c.

The protein localises to the cell inner membrane. In terms of biological role, produces ATP from ADP in the presence of a proton gradient across the membrane. This chain is ATP synthase epsilon chain, found in Rhizobium johnstonii (strain DSM 114642 / LMG 32736 / 3841) (Rhizobium leguminosarum bv. viciae).